The chain runs to 442 residues: MYRNDVKEISMEQTKIILDENEMPKKWYNVLADLPSPIDPPLDPRTWQPISPDALEPIFPKALIMQEMSSDRYIDIPEEVLDVYRLWRPSPLFRAHQLEKVLKSPAKIYYKYEGVSPAGSHKTNTSIAQAYYNMKEGTERLTTETGAGQWGSALSLACNYFDLECKVYMVRSSFYQKPYRKSLITLWGGNVVPSPSPDTEFGRKILQEQPDTPGSLGIAISEAVEDAIAHENTKYSLGSVLNHVVLHQTVIGAECKQQLAQVEEYPDVVIGCCGGGSNLGGIGLEFIKDRLEGKHSARVVAVEPSACPSLTKGEYRYDFGDTAEMTPLLKMYTLGHKHVPPAIHAGGLRYHGDSPIISKLCSEGLMEAVSYDQQEVFDAAVQFARTEGIVPAPESSHAIRCAIDEALAAKQTGEEKTILFNLSGHGHFDMSSYDKYFSGELM.

The residue at position 122 (Lys-122) is an N6-(pyridoxal phosphate)lysine.

Belongs to the TrpB family. In terms of assembly, tetramer of two alpha and two beta chains. Pyridoxal 5'-phosphate is required as a cofactor.

It catalyses the reaction (1S,2R)-1-C-(indol-3-yl)glycerol 3-phosphate + L-serine = D-glyceraldehyde 3-phosphate + L-tryptophan + H2O. It functions in the pathway amino-acid biosynthesis; L-tryptophan biosynthesis; L-tryptophan from chorismate: step 5/5. Functionally, the beta subunit is responsible for the synthesis of L-tryptophan from indole and L-serine. The sequence is that of Tryptophan synthase beta chain 2 (trpB2) from Methanosarcina acetivorans (strain ATCC 35395 / DSM 2834 / JCM 12185 / C2A).